We begin with the raw amino-acid sequence, 383 residues long: Acetylornithine deacetylase (383 aa).

H80 provides a ligand contact to Zn(2+). D82 is an active-site residue. D112 is a binding site for Zn(2+). Residue E144 is part of the active site. Residues E145, E169, and H355 each coordinate Zn(2+).

The protein belongs to the peptidase M20A family. ArgE subfamily. As to quaternary structure, homodimer. It depends on Zn(2+) as a cofactor. The cofactor is Co(2+). Requires glutathione as cofactor.

The protein localises to the cytoplasm. The enzyme catalyses N(2)-acetyl-L-ornithine + H2O = L-ornithine + acetate. Its pathway is amino-acid biosynthesis; L-arginine biosynthesis; L-ornithine from N(2)-acetyl-L-ornithine (linear): step 1/1. Catalyzes the hydrolysis of the amide bond of N(2)-acetylated L-amino acids. Cleaves the acetyl group from N-acetyl-L-ornithine to form L-ornithine, an intermediate in L-arginine biosynthesis pathway, and a branchpoint in the synthesis of polyamines. The protein is Acetylornithine deacetylase of Edwardsiella ictaluri (strain 93-146).